The chain runs to 559 residues: Glucose-6-phosphate isomerase (559 aa).

Glu-363 functions as the Proton donor in the catalytic mechanism. Residues His-394 and Lys-523 contribute to the active site.

Belongs to the GPI family.

It localises to the cytoplasm. The catalysed reaction is alpha-D-glucose 6-phosphate = beta-D-fructose 6-phosphate. Its pathway is carbohydrate biosynthesis; gluconeogenesis. It participates in carbohydrate degradation; glycolysis; D-glyceraldehyde 3-phosphate and glycerone phosphate from D-glucose: step 2/4. Catalyzes the reversible isomerization of glucose-6-phosphate to fructose-6-phosphate. This Bartonella henselae (strain ATCC 49882 / DSM 28221 / CCUG 30454 / Houston 1) (Rochalimaea henselae) protein is Glucose-6-phosphate isomerase.